The chain runs to 319 residues: Acetyl-coenzyme A carboxylase carboxyl transferase subunit alpha (319 aa).

The CoA carboxyltransferase C-terminal domain maps to 36 to 293; the sequence is EVERLKTKLE…HDAFLSELDR (258 aa).

The protein belongs to the AccA family. In terms of assembly, acetyl-CoA carboxylase is a heterohexamer composed of biotin carboxyl carrier protein (AccB), biotin carboxylase (AccC) and two subunits each of ACCase subunit alpha (AccA) and ACCase subunit beta (AccD).

It is found in the cytoplasm. The enzyme catalyses N(6)-carboxybiotinyl-L-lysyl-[protein] + acetyl-CoA = N(6)-biotinyl-L-lysyl-[protein] + malonyl-CoA. It functions in the pathway lipid metabolism; malonyl-CoA biosynthesis; malonyl-CoA from acetyl-CoA: step 1/1. Functionally, component of the acetyl coenzyme A carboxylase (ACC) complex. First, biotin carboxylase catalyzes the carboxylation of biotin on its carrier protein (BCCP) and then the CO(2) group is transferred by the carboxyltransferase to acetyl-CoA to form malonyl-CoA. In Dichelobacter nodosus (strain VCS1703A), this protein is Acetyl-coenzyme A carboxylase carboxyl transferase subunit alpha.